The primary structure comprises 841 residues: SLIT and NTRK-like protein 6 (841 aa).

An N-terminal signal peptide occupies residues 1–26; it reads MKLWIHLFYSSLLACISLHSQTPVLS. Positions 27-67 constitute an LRRNT 1 domain; the sequence is SRGSCDSLCNCEEKDGTMLINCEAKGIKMVSEISVPPSRPF. Over 27 to 608 the chain is Extracellular; sequence SRGSCDSLCN…RSLTDAVPLS (582 aa). LRR repeat units follow at residues 89–110, 113–134, 137–158, 161–182, and 184–205; these read NAISIHLGFNNIADIEIGAFNG, LLKQLHINHNSLEILKEDTFHG, NLEFLQADNNFITVIEPSAFSK, RLKVLILNDNAIESLPPNIFRF, and PLTHLDLRGNQLQTLPYVGFLE. The 52-residue stretch at 218 to 269 folds into the LRRCT 1 domain; that stretch reads NKWACNCDLLQLKTWLENMPPQSIIGDVVCNSPPFFKGSILSRLKKESICPT. Positions 320-361 constitute an LRRNT 2 domain; sequence PSTQLPGPYCPIPCNCKVLSPSGLLIHCQERNIESLSDLRPP. LRR repeat units lie at residues 364-385, 388-409, 412-433, 436-457, 460-481, and 483-504; these read NPRKLILAGNIIHSLMKSDLVE, TLEMLHLGNNRIEVLEEGSFMN, RLQKLYLNGNHLTKLSKGMFLG, NLEYLYLEYNAIKEILPGTFNP, KLKVLYLNNNLLQVLPPHIFSG, and PLTKVNLKTNQFTHLPVSNILD. Residues 517 to 568 form the LRRCT 2 domain; it reads NPWDCSCDLVGLQQWIQKLSKNTVTDDILCTSPGHLDKKELKALNSEILCPG. Residues 609 to 629 form a helical membrane-spanning segment; the sequence is VLILGLLIMFITIVFCAAGIV. Over 630-841 the chain is Cytoplasmic; that stretch reads VLVLHRRRRY…DYLEVLEQQT (212 aa).

Belongs to the SLITRK family. In adult brain, highly expressed in putamen with no expression in cerebral cortex. Expressed in adult and fetal lung and fetal liver. Also expressed at high levels in some brain tumors including medulloblastomas and primitive neuroectodermal tumors.

The protein resides in the cell membrane. In terms of biological role, regulator of neurite outgrowth required for normal hearing and vision. This chain is SLIT and NTRK-like protein 6 (SLITRK6), found in Homo sapiens (Human).